The sequence spans 831 residues: Molybdenum cofactor sulfurase (831 aa).

Lys262 is modified (N6-(pyridoxal phosphate)lysine). Cys422 is an active-site residue. The MOSC domain maps to Ala651 to Lys823.

The protein belongs to the class-V pyridoxal-phosphate-dependent aminotransferase family. MOCOS subfamily. Pyridoxal 5'-phosphate serves as cofactor.

The catalysed reaction is Mo-molybdopterin + L-cysteine + AH2 = thio-Mo-molybdopterin + L-alanine + A + H2O. Its pathway is cofactor biosynthesis; molybdopterin biosynthesis. In terms of biological role, sulfurates the molybdenum cofactor. Sulfation of molybdenum is essential for xanthine dehydrogenase (XDH) and aldehyde oxidase (ADO) enzymes in which molybdenum cofactor is liganded by 1 oxygen and 1 sulfur atom in active form. This chain is Molybdenum cofactor sulfurase (mocos), found in Danio rerio (Zebrafish).